The following is a 416-amino-acid chain: Cyclic dinucleotide synthase CdnG (416 aa).

Ser72 contacts GTP. Residues Asp89, Asp91, and Asp140 contribute to the active site. Asp91 provides a ligand contact to GTP. Asp91 provides a ligand contact to Mg(2+). A disordered region spans residues 145–167 (RRRAPKEKEGEIPHAKKGTRSDP). A compositionally biased stretch (basic and acidic residues) spans 150 to 167 (KEKEGEIPHAKKGTRSDP). GTP contacts are provided by Lys236, Ser253, Glu305, Arg306, and Asp309.

The protein belongs to the CD-NTase family. G10 subfamily. Mg(2+) is required as a cofactor.

It carries out the reaction UTP + GTP = 3',3'-cGMP-UMP + 2 diphosphate. It catalyses the reaction GTP + ATP = 3',3'-cGAMP + 2 diphosphate. The enzyme catalyses 2 ATP = 3',3'-c-di-AMP + 2 diphosphate. In terms of biological role, cyclic nucleotide synthase (second messenger synthase) of a CBASS antivirus system. CBASS (cyclic oligonucleotide-based antiphage signaling system) provides immunity against bacteriophage. The CD-NTase protein synthesizes cyclic nucleotides in response to infection; these serve as specific second messenger signals. The signals activate a diverse range of effectors, leading to bacterial cell death and thus abortive phage infection. A type II-short CBASS system. Its function is as follows. Cyclic dinucleotide synthase that catalyzes the synthesis of predominantly 3'3'-cGMP-UMP, followed by 3'3'-cGAMP and c-di-AMP in a reaction mixture of ATP, CTP, GTP and UTP. The cyclic nucleotide products are second messengers that activate the CBASS Cap5 effector nuclease, leading to DNA degradation and probably cell death. Cyclic nucleotides do not activate the effector equally; reactions with ATP/GTP, ATP/UTP and ATP alone activate Cap5, whereas reaction with GTP/UTP (the major in vitro product) do not. The protein is Cyclic dinucleotide synthase CdnG of Bradyrhizobium diazoefficiens (strain JCM 10833 / BCRC 13528 / IAM 13628 / NBRC 14792 / USDA 110).